A 357-amino-acid chain; its full sequence is 3-isopropylmalate dehydrogenase (357 aa).

Residue 76–89 participates in NAD(+) binding; it reads GPKWDDLPSEKRPE. Substrate-binding residues include R96, R106, R135, and D224. Positions 224, 248, and 252 each coordinate Mg(2+). 282–294 contributes to the NAD(+) binding site; the sequence is GSAPDIAGQDKAN.

Belongs to the isocitrate and isopropylmalate dehydrogenases family. LeuB type 1 subfamily. Homodimer. Mg(2+) is required as a cofactor. Mn(2+) serves as cofactor.

The protein localises to the cytoplasm. It catalyses the reaction (2R,3S)-3-isopropylmalate + NAD(+) = 4-methyl-2-oxopentanoate + CO2 + NADH. The protein operates within amino-acid biosynthesis; L-leucine biosynthesis; L-leucine from 3-methyl-2-oxobutanoate: step 3/4. Catalyzes the oxidation of 3-carboxy-2-hydroxy-4-methylpentanoate (3-isopropylmalate) to 3-carboxy-4-methyl-2-oxopentanoate. The product decarboxylates to 4-methyl-2 oxopentanoate. This Nitratidesulfovibrio vulgaris (strain ATCC 29579 / DSM 644 / CCUG 34227 / NCIMB 8303 / VKM B-1760 / Hildenborough) (Desulfovibrio vulgaris) protein is 3-isopropylmalate dehydrogenase.